The chain runs to 359 residues: DNA polymerase IV (359 aa).

The UmuC domain maps to 4 to 184 (IVHVDMDAFY…LKVNRIPGVG (181 aa)). Aspartate 8 and aspartate 102 together coordinate Mg(2+). Glutamate 103 is a catalytic residue.

The protein belongs to the DNA polymerase type-Y family. In terms of assembly, monomer. It depends on Mg(2+) as a cofactor.

It localises to the cytoplasm. It catalyses the reaction DNA(n) + a 2'-deoxyribonucleoside 5'-triphosphate = DNA(n+1) + diphosphate. Its function is as follows. Poorly processive, error-prone DNA polymerase involved in untargeted mutagenesis. Copies undamaged DNA at stalled replication forks, which arise in vivo from mismatched or misaligned primer ends. These misaligned primers can be extended by PolIV. Exhibits no 3'-5' exonuclease (proofreading) activity. May be involved in translesional synthesis, in conjunction with the beta clamp from PolIII. The protein is DNA polymerase IV of Xanthomonas euvesicatoria pv. vesicatoria (strain 85-10) (Xanthomonas campestris pv. vesicatoria).